The chain runs to 508 residues: GMP synthase [glutamine-hydrolyzing] (508 aa).

Residues 1 to 189 (MILVLDFGSQ…ALLVCGCEKT (189 aa)) form the Glutamine amidotransferase type-1 domain. Cysteine 78 functions as the Nucleophile in the catalytic mechanism. Active-site residues include histidine 163 and glutamate 165. The 194-residue stretch at 190–383 (WGMQHFAQRE…LGVSQDFLMR (194 aa)) folds into the GMPS ATP-PPase domain. 217–223 (SGGVDST) is a binding site for ATP.

As to quaternary structure, homodimer.

The enzyme catalyses XMP + L-glutamine + ATP + H2O = GMP + L-glutamate + AMP + diphosphate + 2 H(+). The protein operates within purine metabolism; GMP biosynthesis; GMP from XMP (L-Gln route): step 1/1. Catalyzes the synthesis of GMP from XMP. The protein is GMP synthase [glutamine-hydrolyzing] of Helicobacter pylori (strain P12).